A 328-amino-acid chain; its full sequence is Ketol-acid reductoisomerase (NADP(+)) (328 aa).

A KARI N-terminal Rossmann domain is found at 1–181 (MKIYYENDID…GLARAGVLET (181 aa)). NADP(+)-binding positions include 24-27 (YGSQ), Arg-47, Ser-52, and 82-85 (DEIQ). Residue His-107 is part of the active site. Gly-133 serves as a coordination point for NADP(+). The KARI C-terminal knotted domain occupies 182 to 327 (TFREETETDL…SKLRKLCGLE (146 aa)). 4 residues coordinate Mg(2+): Asp-190, Glu-194, Glu-226, and Glu-230. Ser-251 provides a ligand contact to substrate.

Belongs to the ketol-acid reductoisomerase family. Mg(2+) is required as a cofactor.

It catalyses the reaction (2R)-2,3-dihydroxy-3-methylbutanoate + NADP(+) = (2S)-2-acetolactate + NADPH + H(+). The catalysed reaction is (2R,3R)-2,3-dihydroxy-3-methylpentanoate + NADP(+) = (S)-2-ethyl-2-hydroxy-3-oxobutanoate + NADPH + H(+). It functions in the pathway amino-acid biosynthesis; L-isoleucine biosynthesis; L-isoleucine from 2-oxobutanoate: step 2/4. Its pathway is amino-acid biosynthesis; L-valine biosynthesis; L-valine from pyruvate: step 2/4. In terms of biological role, involved in the biosynthesis of branched-chain amino acids (BCAA). Catalyzes an alkyl-migration followed by a ketol-acid reduction of (S)-2-acetolactate (S2AL) to yield (R)-2,3-dihydroxy-isovalerate. In the isomerase reaction, S2AL is rearranged via a Mg-dependent methyl migration to produce 3-hydroxy-3-methyl-2-ketobutyrate (HMKB). In the reductase reaction, this 2-ketoacid undergoes a metal-dependent reduction by NADPH to yield (R)-2,3-dihydroxy-isovalerate. The chain is Ketol-acid reductoisomerase (NADP(+)) from Methanothermobacter thermautotrophicus (strain ATCC 29096 / DSM 1053 / JCM 10044 / NBRC 100330 / Delta H) (Methanobacterium thermoautotrophicum).